Reading from the N-terminus, the 578-residue chain is Interleukin-10 receptor subunit alpha (578 aa).

Positions 1–21 are cleaved as a signal peptide; that stretch reads MLPCLVVLLAALLSLRLGSDA. Residues 22-235 are Extracellular-facing; that stretch reads HGTELPSPPS…LTRQYFTVTN (214 aa). Residues asparagine 50, asparagine 74, asparagine 110, asparagine 154, asparagine 177, and asparagine 189 are each glycosylated (N-linked (GlcNAc...) asparagine). A disulfide bridge connects residues cysteine 56 and cysteine 75. A disulfide bond links cysteine 202 and cysteine 223. A helical transmembrane segment spans residues 236-256; the sequence is VIIFFAFVLLLSGALAYCLAL. Residues 257–578 lie on the Cytoplasmic side of the membrane; it reads QLYVRRRKKL…PLISSLQSSE (322 aa). The interval 313-436 is disordered; that stretch reads LHGSTDSGFG…PPEPEVPGEE (124 aa). Residues 316-332 show a composition bias toward polar residues; sequence STDSGFGSTKPSLQTEE. Positions 318-323 match the BTRC recognition motif motif; that stretch reads DSGFGS. The span at 357 to 371 shows a compositional bias: low complexity; that stretch reads GDSCSSGSSNSTDSG. Residues 377–396 are compositionally biased toward polar residues; it reads PSLSPSTGPTWEQQVGSNSR.

Belongs to the type II cytokine receptor family. Interacts with IL10. Interacts with IL10RB. Interacts (via its cytoplasmic domain) with JAK1 (via N-terminus). Interacts with BTRC; this interaction leads to IL10RA ubiquitination and subsequent degradation. Interacts with STAT3. As to quaternary structure, (Microbial infection) Interacts with human cytomegalovirus protein IL10. In terms of assembly, (Microbial infection) Interacts with Epstein-Barr virus protein IL10. Post-translationally, phosphorylated. Phosphorylation of the cytoplasmic tail induced STAT3 activation. In terms of processing, ubiquitinated by BTRC; ubiquitination leads to endocytosis and subsequent degradation of IL10RA. Primarily expressed in hematopoetic cells including B-cells, T-cells, NK cells, monocytes and macrophages. Not expressed in non-hematopoetic cells such as fibroblasts or endothelial cells.

The protein resides in the cell membrane. It is found in the cytoplasm. Cell surface receptor for the cytokine IL10 that participates in IL10-mediated anti-inflammatory functions, limiting excessive tissue disruption caused by inflammation. Upon binding to IL10, induces a conformational change in IL10RB, allowing IL10RB to bind IL10 as well. In turn, the heterotetrameric assembly complex, composed of two subunits of IL10RA and IL10RB, activates the kinases JAK1 and TYK2 that are constitutively associated with IL10RA and IL10RB respectively. These kinases then phosphorylate specific tyrosine residues in the intracellular domain in IL10RA leading to the recruitment and subsequent phosphorylation of STAT3. Once phosphorylated, STAT3 homodimerizes, translocates to the nucleus and activates the expression of anti-inflammatory genes. In addition, IL10RA-mediated activation of STAT3 inhibits starvation-induced autophagy. The sequence is that of Interleukin-10 receptor subunit alpha (IL10RA) from Homo sapiens (Human).